The sequence spans 615 residues: Semenogelin-1 (615 aa).

The N-terminal stretch at 1–23 is a signal peptide; it reads MKPIIFLVLSLLLILEKQAAVMG. A Pyrrolidone carboxylic acid modification is found at Gln-24. Disordered regions lie at residues 24–118, 133–160, and 172–585; these read QKGG…EHGK, GHAPHGTQNPSQDQGNSTSGKGISSQDS, and GKEQ…HRSY. Polar residues predominate over residues 34 to 46; it reads SESSQFPHGQKGQ. Basic and acidic residues predominate over residues 50–80; it reads ARKDKQHAESKRSVSIEHTYHVDIPDHDQTR. The segment covering 81–91 has biased composition (polar residues); it reads TSKQYDLNAQN. Residues 107-118 are compositionally biased toward basic and acidic residues; that stretch reads FNHKQEGREHGK. Polar residues-rich tracts occupy residues 138–160, 177–196, and 209–224; these read GTQNPSQDQGNSTSGKGISSQDS, SVSGTQRNGTQGGSQSSPVL, and TQNSLQNKGSSPNVNE. Residues Asn-148, Asn-184, and Asn-223 are each glycosylated (N-linked (GlcNAc...) asparagine). The segment covering 241–253 has biased composition (basic and acidic residues); that stretch reads QEDRLQHGSKDVF. The span at 254-265 shows a compositional bias: polar residues; that stretch reads SKNQNQTRNPNQ. N-linked (GlcNAc...) asparagine glycans are attached at residues Asn-258 and Asn-275. The segment covering 283-300 has biased composition (basic and acidic residues); it reads TEERRPNHGEKGIQKDAS. Asn-306 carries an N-linked (GlcNAc...) asparagine glycan. Over residues 308 to 317 the composition is skewed to basic and acidic residues; the sequence is TEDKMHDKSQ. Residue Asn-332 is glycosylated (N-linked (GlcNAc...) asparagine). Residues 341–358 are compositionally biased toward basic and acidic residues; sequence TEERRPNHGEKGIQKDAS. Asn-364 carries an N-linked (GlcNAc...) asparagine glycan. The segment covering 366 to 375 has biased composition (basic and acidic residues); it reads TEDKMHDKSQ. The N-linked (GlcNAc...) asparagine glycan is linked to Asn-390. Over residues 399 to 416 the composition is skewed to basic and acidic residues; the sequence is TEERRPNHGEKGIQKDAS. Asn-422 carries N-linked (GlcNAc...) asparagine glycosylation. The segment covering 424-433 has biased composition (basic and acidic residues); it reads TEDKMHDKSQ. N-linked (GlcNAc...) asparagine glycosylation is present at Asn-448. A compositionally biased stretch (basic and acidic residues) spans 457-474; the sequence is TEERRPNHGEKGIQKDAS. Asn-480 carries N-linked (GlcNAc...) asparagine glycosylation. Basic and acidic residues predominate over residues 481 to 491; it reads KTEDKMHDKSQ. Asn-506 carries an N-linked (GlcNAc...) asparagine glycan. The segment covering 515-532 has biased composition (basic and acidic residues); sequence TEERRPNHGEKGIQKDAS. N-linked (GlcNAc...) asparagine glycosylation is present at Asn-538. Over residues 539–549 the composition is skewed to basic and acidic residues; it reads KTEDEKHDKSQ. A compositionally biased stretch (polar residues) spans 550 to 563; that stretch reads KQVTTPSQDQQSGQ.

This sequence belongs to the semenogelin family. Occurs in disulfide-linked complexes. Post-translationally, transglutaminase substrate. In terms of processing, rapidly cleaved after ejaculation by KLK3/PSA, resulting in liquefaction of the semen coagulum and the progressive release of motile spermatozoa.

The protein resides in the secreted. Its function is as follows. Predominant protein in semen. It participates in the formation of a gel matrix entrapping the accessory gland secretions and ejaculated spermatozoa. Fragments of semenogelin and/or fragments of the related proteins may contribute to the activation of progressive sperm movements as the gel-forming proteins are fragmented by KLK3/PSA. This chain is Semenogelin-1 (SEMG1), found in Saguinus oedipus (Cotton-top tamarin).